Reading from the N-terminus, the 427-residue chain is Trigger factor (427 aa).

Residues 163–248 (GNIAIIDFKG…VKGIKVKELP (86 aa)) form the PPIase FKBP-type domain.

Belongs to the FKBP-type PPIase family. Tig subfamily.

The protein localises to the cytoplasm. The enzyme catalyses [protein]-peptidylproline (omega=180) = [protein]-peptidylproline (omega=0). Functionally, involved in protein export. Acts as a chaperone by maintaining the newly synthesized protein in an open conformation. Functions as a peptidyl-prolyl cis-trans isomerase. The sequence is that of Trigger factor from Clostridium botulinum (strain Alaska E43 / Type E3).